The chain runs to 245 residues: Uridylate kinase (245 aa).

12–15 is an ATP binding site; it reads KISG. Gly-55 serves as a coordination point for UMP. Positions 56 and 60 each coordinate ATP. UMP-binding positions include Asp-76 and 137–144; that span reads AGAPYLTT. 3 residues coordinate ATP: Thr-164, Tyr-171, and Asp-174.

The protein belongs to the UMP kinase family. In terms of assembly, homohexamer.

The protein resides in the cytoplasm. The catalysed reaction is UMP + ATP = UDP + ADP. The protein operates within pyrimidine metabolism; CTP biosynthesis via de novo pathway; UDP from UMP (UMPK route): step 1/1. With respect to regulation, inhibited by UTP. Its function is as follows. Catalyzes the reversible phosphorylation of UMP to UDP. This Chlamydia muridarum (strain MoPn / Nigg) protein is Uridylate kinase.